We begin with the raw amino-acid sequence, 261 residues long: Cytochrome c oxidase subunit 3 (261 aa).

Residues Met-1 to Pro-15 are Mitochondrial matrix-facing. A helical transmembrane segment spans residues Trp-16–Trp-34. At Phe-35–Thr-40 the chain is on the mitochondrial intermembrane side. A helical membrane pass occupies residues Ala-41–Thr-66. Topologically, residues Phe-67–Thr-72 are mitochondrial matrix. A helical membrane pass occupies residues Pro-73 to Ser-105. The Mitochondrial intermembrane segment spans residues Leu-106–Glu-128. A helical membrane pass occupies residues Val-129 to Met-152. Over Glu-153–Asn-155 the chain is Mitochondrial matrix. A helical transmembrane segment spans residues Arg-156–Glu-183. Over Ala-184–Asp-190 the chain is Mitochondrial intermembrane. The chain crosses the membrane as a helical span at residues Gly-191 to Leu-223. The Mitochondrial matrix segment spans residues Lys-224–His-232. A helical transmembrane segment spans residues Phe-233–Ile-256. The Mitochondrial intermembrane segment spans residues Tyr-257 to Ser-261.

This sequence belongs to the cytochrome c oxidase subunit 3 family. Component of the cytochrome c oxidase (complex IV, CIV), a multisubunit enzyme composed of 14 subunits. The complex is composed of a catalytic core of 3 subunits MT-CO1, MT-CO2 and MT-CO3, encoded in the mitochondrial DNA, and 11 supernumerary subunits COX4I, COX5A, COX5B, COX6A, COX6B, COX6C, COX7A, COX7B, COX7C, COX8 and NDUFA4, which are encoded in the nuclear genome. The complex exists as a monomer or a dimer and forms supercomplexes (SCs) in the inner mitochondrial membrane with NADH-ubiquinone oxidoreductase (complex I, CI) and ubiquinol-cytochrome c oxidoreductase (cytochrome b-c1 complex, complex III, CIII), resulting in different assemblies (supercomplex SCI(1)III(2)IV(1) and megacomplex MCI(2)III(2)IV(2)).

The protein resides in the mitochondrion inner membrane. The catalysed reaction is 4 Fe(II)-[cytochrome c] + O2 + 8 H(+)(in) = 4 Fe(III)-[cytochrome c] + 2 H2O + 4 H(+)(out). In terms of biological role, component of the cytochrome c oxidase, the last enzyme in the mitochondrial electron transport chain which drives oxidative phosphorylation. The respiratory chain contains 3 multisubunit complexes succinate dehydrogenase (complex II, CII), ubiquinol-cytochrome c oxidoreductase (cytochrome b-c1 complex, complex III, CIII) and cytochrome c oxidase (complex IV, CIV), that cooperate to transfer electrons derived from NADH and succinate to molecular oxygen, creating an electrochemical gradient over the inner membrane that drives transmembrane transport and the ATP synthase. Cytochrome c oxidase is the component of the respiratory chain that catalyzes the reduction of oxygen to water. Electrons originating from reduced cytochrome c in the intermembrane space (IMS) are transferred via the dinuclear copper A center (CU(A)) of subunit 2 and heme A of subunit 1 to the active site in subunit 1, a binuclear center (BNC) formed by heme A3 and copper B (CU(B)). The BNC reduces molecular oxygen to 2 water molecules using 4 electrons from cytochrome c in the IMS and 4 protons from the mitochondrial matrix. This is Cytochrome c oxidase subunit 3 (MT-CO3) from Syncerus caffer (African buffalo).